Here is a 52-residue protein sequence, read N- to C-terminus: Transmembrane protein ORF52 (52 aa).

The next 2 membrane-spanning stretches (helical) occupy residues 11 to 31 (AFLGVLNALAPIIEGATEIIT) and 32 to 52 (FMALTYVMTMVIARILGGLFV).

The protein localises to the host membrane. The protein is Transmembrane protein ORF52 of Acidianus filamentous virus 1 (isolate United States/Yellowstone) (AFV-1).